Here is a 369-residue protein sequence, read N- to C-terminus: MAKRDYYDVLGISKSASQDEIKKAYRSLAKKYHPDVSKEKDAETKFKEVQEAYDVLNDSNKKAQYDRFGHAGTGQDPFGGAGGGFGGFGGFDDIISQFFGGGQTRRTRQTSNVGEDLNMRMTIDFMEAVLGTTKNVSVDITQDCGHCHGSGAESSKDVHTCSKCHGQGFINVDQRTMFGTMRSQQVCPQCQGEGQTIDNKCHVCSGAGRVKAKKTVDVKVPAGVDNEMTLRVPGYGNGGRKGAESGDLYITFRVKPHKIFKRRGSDIILDVPITFTQAALGDKIDIPTIYGEVELTIPAGIQSGTELKLKNKGTKDPRTGKTGDQHVIVNIETPKNLSSEEKKLFEQLSKLDSPRKKSGWDKFKSFFTN.

The J domain occupies 5–69 (DYYDVLGISK…NKKAQYDRFG (65 aa)). A CR-type zinc finger spans residues 131–213 (GTTKNVSVDI…CSGAGRVKAK (83 aa)). Residues cysteine 144, cysteine 147, cysteine 161, cysteine 164, cysteine 187, cysteine 190, cysteine 201, and cysteine 204 each contribute to the Zn(2+) site. CXXCXGXG motif repeat units follow at residues 144–151 (CGHCHGSG), 161–168 (CSKCHGQG), 187–194 (CPQCQGEG), and 201–208 (CHVCSGAG).

The protein belongs to the DnaJ family. As to quaternary structure, homodimer. It depends on Zn(2+) as a cofactor.

The protein resides in the cytoplasm. Its function is as follows. Participates actively in the response to hyperosmotic and heat shock by preventing the aggregation of stress-denatured proteins and by disaggregating proteins, also in an autonomous, DnaK-independent fashion. Unfolded proteins bind initially to DnaJ; upon interaction with the DnaJ-bound protein, DnaK hydrolyzes its bound ATP, resulting in the formation of a stable complex. GrpE releases ADP from DnaK; ATP binding to DnaK triggers the release of the substrate protein, thus completing the reaction cycle. Several rounds of ATP-dependent interactions between DnaJ, DnaK and GrpE are required for fully efficient folding. Also involved, together with DnaK and GrpE, in the DNA replication of plasmids through activation of initiation proteins. The protein is Chaperone protein DnaJ of Acholeplasma laidlawii.